The following is a 141-amino-acid chain: Relaxin-3 (141 aa).

Positions 1-24 (MAMLGLLLLASWALLGALGLQAEA) are cleaved as a signal peptide. Intrachain disulfides connect Cys-34–Cys-128, Cys-46–Cys-141, and Cys-127–Cys-132. The propeptide at 54–117 (ADILAHESLG…GSPGVVRGSR (64 aa)) is connecting peptide.

The protein belongs to the insulin family. In terms of assembly, heterodimer of a B chain and an A chain linked by two disulfide bonds. High expression in the brain localized to the pons/medulla with highest levels in pars ventromedialis of the dorsal tegmental nucleus. Significant expression is also detected in the spleen, thymus, lung, testis and ovary.

Its subcellular location is the secreted. May play a role in neuropeptide signaling processes. Ligand for LGR7, relaxin-3 receptor-1 and relaxin-3 receptor-2. The protein is Relaxin-3 (Rln3) of Mus musculus (Mouse).